Consider the following 311-residue polypeptide: Aspartate carbamoyltransferase catalytic subunit (311 aa).

The carbamoyl phosphate site is built by arginine 55 and threonine 56. Lysine 85 contacts L-aspartate. Carbamoyl phosphate contacts are provided by arginine 106, histidine 135, and glutamine 138. L-aspartate is bound by residues arginine 168 and arginine 230. The carbamoyl phosphate site is built by leucine 268 and proline 269.

It belongs to the aspartate/ornithine carbamoyltransferase superfamily. ATCase family. Heterododecamer (2C3:3R2) of six catalytic PyrB chains organized as two trimers (C3), and six regulatory PyrI chains organized as three dimers (R2).

The enzyme catalyses carbamoyl phosphate + L-aspartate = N-carbamoyl-L-aspartate + phosphate + H(+). Its pathway is pyrimidine metabolism; UMP biosynthesis via de novo pathway; (S)-dihydroorotate from bicarbonate: step 2/3. Functionally, catalyzes the condensation of carbamoyl phosphate and aspartate to form carbamoyl aspartate and inorganic phosphate, the committed step in the de novo pyrimidine nucleotide biosynthesis pathway. This is Aspartate carbamoyltransferase catalytic subunit from Pectobacterium atrosepticum (strain SCRI 1043 / ATCC BAA-672) (Erwinia carotovora subsp. atroseptica).